A 267-amino-acid polypeptide reads, in one-letter code: Apolipoprotein A-I (267 aa).

An N-terminal signal peptide occupies residues 1-18 (MKAAVLTLAVLFLTGSQA). 2 tandem repeats follow at residues 68–89 (LKLL…EQLG) and 90–111 (PVTQ…QEMS). The segment at 68-267 (LKLLDNWDSV…EEYTKKLNTQ (200 aa)) is 10 X approximate tandem repeats. Position 110 is a methionine sulfoxide (Met110). A 3; half-length repeat occupies 112 to 122 (KDLEEVKAKVQ). 5 tandem repeats follow at residues 123-144 (PYLD…QKVE), 145-166 (PLRA…EKLS), 167-188 (PLGE…THLA), 189-210 (PYSD…ENGG), and 211-232 (ARLA…EKAK). Met136 bears the Methionine sulfoxide mark. One copy of the 9; half-length repeat lies at 233–243 (PALEDLRQGLL). Repeat 10 spans residues 244–267 (PVLESFKVSFLSALEEYTKKLNTQ).

The protein belongs to the apolipoprotein A1/A4/E family. Homodimer. Interacts with APOA1BP and CLU. Component of a sperm activating protein complex (SPAP), consisting of APOA1, an immunoglobulin heavy chain, an immunoglobulin light chain and albumin. Interacts with NDRG1. Interacts with SCGB3A2. Interacts with NAXE and YJEFN3. In terms of processing, glycosylated. Post-translationally, palmitoylated. Phosphorylation sites are present in the extracellular medium. Major protein of plasma HDL, also found in chylomicrons.

Its subcellular location is the secreted. In terms of biological role, participates in the reverse transport of cholesterol from tissues to the liver for excretion by promoting cholesterol efflux from tissues and by acting as a cofactor for the lecithin cholesterol acyltransferase (LCAT). As part of the SPAP complex, activates spermatozoa motility. In Pan paniscus (Pygmy chimpanzee), this protein is Apolipoprotein A-I (APOA1).